The following is a 222-amino-acid chain: Sugar fermentation stimulation protein homolog (222 aa).

It belongs to the SfsA family.

This Thermoplasma acidophilum (strain ATCC 25905 / DSM 1728 / JCM 9062 / NBRC 15155 / AMRC-C165) protein is Sugar fermentation stimulation protein homolog.